Consider the following 451-residue polypeptide: Tubulin alpha-1A chain (451 aa).

Positions 10, 11, 12, and 15 each coordinate GTP. Lys-40 bears the N6-acetyllysine mark. GTP contacts are provided by Glu-71, Ala-99, Ser-140, Gly-143, Gly-144, Thr-145, Gly-146, Thr-179, Glu-183, Asn-206, Tyr-224, Asn-228, and Leu-252. Glu-71 contacts Mg(2+). Residue Glu-254 is part of the active site. A 3'-nitrotyrosine modification is found at Tyr-282. A Phosphoserine modification is found at Ser-439. Residues Glu-443 and Glu-445 each carry the 5-glutamyl polyglutamate modification. 3'-nitrotyrosine is present on Tyr-451.

Belongs to the tubulin family. Heterodimer of alpha- and beta-tubulin. A typical microtubule is a hollow water-filled tube with an outer diameter of 25 nm and an inner diameter of 15 nM. Alpha-beta heterodimers associate head-to-tail to form protofilaments running lengthwise along the microtubule wall with the beta-tubulin subunit facing the microtubule plus end conferring a structural polarity. Microtubules usually have 13 protofilaments but different protofilament numbers can be found in some organisms and specialized cells. Interacts with gamma-tubulin; the interaction allows microtubules to nucleate from the gamma-tubulin ring complex (gTuRC). Nascent microtubule interacts (via alpha-tubulin MREC motif) with TTC5/STRAP; this interaction may result in tubulin mRNA-targeted degradation. Component of sperm flagellar doublet microtubules. Requires Mg(2+) as cofactor. In terms of processing, some glutamate residues at the C-terminus are polyglycylated, resulting in polyglycine chains on the gamma-carboxyl group. Glycylation is mainly limited to tubulin incorporated into axonemes (cilia and flagella) whereas glutamylation is prevalent in neuronal cells, centrioles, axonemes, and the mitotic spindle. Both modifications can coexist on the same protein on adjacent residues, and lowering polyglycylation levels increases polyglutamylation, and reciprocally. Cilia and flagella glycylation is required for their stability and maintenance. Flagella glycylation controls sperm motility. Some glutamate residues at the C-terminus are polyglutamylated, resulting in polyglutamate chains on the gamma-carboxyl group. Polyglutamylation plays a key role in microtubule severing by spastin (SPAST). SPAST preferentially recognizes and acts on microtubules decorated with short polyglutamate tails: severing activity by SPAST increases as the number of glutamates per tubulin rises from one to eight, but decreases beyond this glutamylation threshold. Glutamylation is also involved in cilia motility. Post-translationally, acetylation of alpha chains at Lys-40 is located inside the microtubule lumen. This modification has been correlated with increased microtubule stability, intracellular transport and ciliary assembly. In terms of processing, methylation of alpha chains at Lys-40 is found in mitotic microtubules and is required for normal mitosis and cytokinesis contributing to genomic stability. Nitration of Tyr-451 is irreversible and interferes with normal dynein intracellular distribution. Post-translationally, undergoes a tyrosination/detyrosination cycle, the cyclic removal and re-addition of a C-terminal tyrosine residue by the enzymes tubulin tyrosine carboxypeptidase (MATCAP1, VASH1 or VASH2) and tubulin tyrosine ligase (TTL), respectively. In terms of processing, tyrosination promotes microtubule interaction with CAP-Gly domain-containing proteins such as CLIP1, CLIP2 and DCTN1. Tyrosination regulates the initiation of dynein-dynactin motility via interaction with DCTN1, which brings the dynein-dynactin complex into contact with microtubules. In neurons, tyrosinated tubulins mediate the initiation of retrograde vesicle transport. Detyrosination is involved in metaphase plate congression by guiding chromosomes during mitosis: detyrosination promotes interaction with CENPE, promoting pole-proximal transport of chromosomes toward the equator. Detyrosination increases microtubules-dependent mechanotransduction in dystrophic cardiac and skeletal muscle. In cardiomyocytes, detyrosinated microtubules are required to resist to contractile compression during contraction: detyrosination promotes association with desmin (DES) at force-generating sarcomeres, leading to buckled microtubules and mechanical resistance to contraction.

Its subcellular location is the cytoplasm. It is found in the cytoskeleton. The protein resides in the flagellum axoneme. The enzyme catalyses GTP + H2O = GDP + phosphate + H(+). Functionally, tubulin is the major constituent of microtubules, protein filaments consisting of alpha- and beta-tubulin heterodimers. Microtubules grow by the addition of GTP-tubulin dimers to the microtubule end, where a stabilizing cap forms. Below the cap, tubulin dimers are in GDP-bound state, owing to GTPase activity of alpha-tubulin. This chain is Tubulin alpha-1A chain (TUBA1A), found in Sus scrofa (Pig).